Consider the following 318-residue polypeptide: Protein phosphatase 1 regulatory subunit 3C (318 aa).

Positions Arg-84–Phe-87 match the PP1-binding motif motif. Residues Pro-141 to Pro-263 form an interaction with EPM2A region. A CBM21 domain is found at Arg-149–Val-257.

As to quaternary structure, interacts with PPP1CC catalytic subunit of PP1 and associates with glycogen. Forms complexes with glycogen phosphorylase, glycogen synthase and phosphorylase kinase which is necessary for its regulation of PP1 activity. Also interacts with EPM2A/laforin. Ubiquitinated by NHLRC1/malin in a EPM2A/laforin-dependent manner.

Functionally, acts as a glycogen-targeting subunit for PP1 and regulates its activity. Activates glycogen synthase, reduces glycogen phosphorylase activity and limits glycogen breakdown. Dramatically increases basal and insulin-stimulated glycogen synthesis upon overexpression in a variety of cell types. The polypeptide is Protein phosphatase 1 regulatory subunit 3C (Bos taurus (Bovine)).